A 505-amino-acid polypeptide reads, in one-letter code: RNA-splicing ligase RtcB homolog (505 aa).

The Mn(2+) site is built by Asp119, Cys122, His227, and His259. Residue 226-230 (NHYAE) coordinates GMP. Ser300 bears the Phosphoserine mark. His353 provides a ligand contact to Mn(2+). Residues 353 to 354 (HN), 402 to 405 (GGTM), Ser409, and 428 to 431 (HGAG) each bind GMP. The GMP-histidine intermediate role is filled by His428. Lys496 participates in a covalent cross-link: Glycyl lysine isopeptide (Lys-Gly) (interchain with G-Cter in SUMO2). GMP is bound at residue Lys504.

The protein belongs to the RtcB family. In terms of assembly, catalytic component of the tRNA-splicing ligase complex. Mn(2+) serves as cofactor.

Its subcellular location is the nucleus. The protein localises to the cytoplasm. The enzyme catalyses a 3'-end 3'-phospho-ribonucleotide-RNA + a 5'-end dephospho-ribonucleoside-RNA + GTP = a ribonucleotidyl-ribonucleotide-RNA + GMP + diphosphate. It catalyses the reaction a 3'-end 2',3'-cyclophospho-ribonucleotide-RNA + a 5'-end dephospho-ribonucleoside-RNA + GTP + H2O = a ribonucleotidyl-ribonucleotide-RNA + GMP + diphosphate + H(+). With respect to regulation, protein archease stimulates the activity of the tRNA ligase complex with high efficiency in the presence of GTP. Its function is as follows. Catalytic subunit of the tRNA-splicing ligase complex that acts by directly joining spliced tRNA halves to mature-sized tRNAs by incorporating the precursor-derived splice junction phosphate into the mature tRNA as a canonical 3',5'-phosphodiester. May act as an RNA ligase with broad substrate specificity, and may function toward other RNAs. The polypeptide is RNA-splicing ligase RtcB homolog (Homo sapiens (Human)).